Reading from the N-terminus, the 682-residue chain is Iron-phytosiderophore transporter yellow stripe 1 (682 aa).

A disordered region spans residues 1 to 36; that stretch reads MDLARRGGAAGADDEGEIERHEPAPEDMESDPAAAR. The next 15 helical transmembrane spans lie at 56–76, 79–99, 124–144, 167–187, 236–256, 288–308, 334–354, 396–416, 428–448, 460–480, 514–534, 549–569, 574–594, 612–632, and 640–660; these read GVVA…KIAL, GLVP…LRGW, CAVA…LLGL, GFGW…LSLI, LSFV…CGFV, LVNI…WPLI, FLCI…VFGV, FPAW…AVII, VIVA…GTGL, IALF…AGLA, VAQF…FLLF, APYG…FSVL, LALS…RDVL, FLVG…VFVW, and AVFM…IWTF.

It belongs to the YSL (TC 2.A.67.2) family. In terms of tissue distribution, expressed in roots of young maize seedlings. Not detected in leaves of iron-sufficient plants, but accumulates in roots and leaves of iron-deficient plants.

The protein resides in the membrane. Its function is as follows. Involved in Fe(3+) uptake. Acts as a proton-coupled symporter for phytosiderophore- and nicotianamine-chelated metals. Capable of transporting either Fe(2+)-nicotianamine or Fe(3+)-phytosiderophore. May transport iron, zinc, nickel, copper and, at a lower rate, manganese and cadmium. This chain is Iron-phytosiderophore transporter yellow stripe 1 (YS1), found in Zea mays (Maize).